The following is a 497-amino-acid chain: 4,4'-diaponeurosporene oxygenase (497 aa).

Position 7 to 19 (7 to 19 (VIGGGLGGISAAI)) interacts with FAD.

The protein belongs to the carotenoid/retinoid oxidoreductase family. CrtP subfamily. FAD serves as cofactor.

The catalysed reaction is all-trans-4,4'-diaponeurosporene + 2 AH2 + 2 O2 = 4,4'-diaponeurosporenal + 2 A + 3 H2O. It functions in the pathway carotenoid biosynthesis; staphyloxanthin biosynthesis; staphyloxanthin from farnesyl diphosphate: step 3/5. Involved in the biosynthesis of the yellow-orange carotenoid staphyloxanthin, which plays a role in the virulence via its protective function against oxidative stress. Catalyzes the oxidation of the terminal methyl side group of 4,4'-diaponeurosporene to form 4,4'-diaponeurosporen-4-al. The polypeptide is 4,4'-diaponeurosporene oxygenase (Staphylococcus aureus (strain MW2)).